We begin with the raw amino-acid sequence, 514 residues long: Maltose/maltodextrin transport system permease protein MalF (514 aa).

Residues 1-16 lie on the Cytoplasmic side of the membrane; that stretch reads MDVIKKKHWWQSDALK. The helical transmembrane segment at 17-36 threads the bilayer; the sequence is WSVLGLLGLLVGYLVVLMYA. Topologically, residues 37–39 are periplasmic; it reads QGE. Residues 40 to 57 form a helical membrane-spanning segment; that stretch reads YLFAITTLILSSAGLYIF. Topologically, residues 58–69 are cytoplasmic; the sequence is ANRKAYAWRYVY. A helical transmembrane segment spans residues 70-92; sequence PGMAGMGLFVLFPLVCTIAIAFT. Over 93 to 283 the chain is Periplasmic; sequence NYSSTNQLTF…QKPFLAIFVW (191 aa). The region spanning 281–505 is the ABC transmembrane type-1 domain; it reads FVWTVVFSLI…LLVGALAIVN (225 aa). Residues 284-306 traverse the membrane as a helical segment; sequence TVVFSLITVFLTVAVGMVLACLV. The Cytoplasmic segment spans residues 307 to 318; sequence QWEALRGKAVYR. The chain crosses the membrane as a helical span at residues 319-341; the sequence is VLLILPYAVPSFISILIFKGLFN. Topologically, residues 342–369 are periplasmic; the sequence is QSFGEINMMLSALFGVKPAWFSDPTTAR. A helical membrane pass occupies residues 370–392; the sequence is TMLIIVNTWLGYPYMMILCMGLL. Residues 393–412 are Cytoplasmic-facing; that stretch reads KAIPDDLYEASAMDGAGPFQ. Residues 413 to 435 form a helical membrane-spanning segment; the sequence is NFFKITLPLLIKPLTPLMIASFA. Residues 436–483 lie on the Periplasmic side of the membrane; that stretch reads FNFNNFVLIQLLTNGGPDRLGTTTPAGYTDLLVNYTYRIAFEGGGGQD. A helical transmembrane segment spans residues 484–506; the sequence is FGLAAAIATLIFLLVGALAIVNL. The Cytoplasmic segment spans residues 507 to 514; the sequence is KATRMKFD.

The protein belongs to the binding-protein-dependent transport system permease family. MalFG subfamily. The complex is composed of two ATP-binding proteins (MalK), two transmembrane proteins (MalG and MalF) and a solute-binding protein (MalE).

Its subcellular location is the cell inner membrane. Part of the ABC transporter complex MalEFGK involved in maltose/maltodextrin import. Probably responsible for the translocation of the substrate across the membrane. This chain is Maltose/maltodextrin transport system permease protein MalF (malF), found in Escherichia coli O157:H7.